The following is a 537-amino-acid chain: Endoprotease aex-5 (537 aa).

The first 17 residues, 1-17 (MKLIFLLLLFGVSPIVC), serve as a signal peptide directing secretion. A propeptide spanning residues 18–99 (QDFEDGVFLA…KLQGFRRYKR (82 aa)) is cleaved from the precursor. The region spanning 111–413 (VWNLTPSLYI…FGLLNAQKLV (303 aa)) is the Peptidase S8 domain. N129 carries an N-linked (GlcNAc...) asparagine glycan. Residues D139 and H178 each act as charge relay system in the active site. A disulfide bond links C286 and C316. The Charge relay system role is filled by S346. N380 carries N-linked (GlcNAc...) asparagine glycosylation. A P/Homo B domain is found at 407-537 (LNAQKLVVMA…KMFKVVGTMS (131 aa)).

The protein belongs to the peptidase S8 family. Furin subfamily.

It localises to the secreted. In terms of biological role, probable serine endoprotease which cleaves preproteins at paired basic amino acids. May process FMRFamide-like (flp) and neuropeptide-like protein (nlp) neuropeptides. In muscles, involved in neuronal retrograde signaling by regulating presynaptic activity and localization of synaptic vesicle fusion protein unc-13 at the neuromuscular junction (NMJ). Acts in the intestine to regulate anterior body muscle contractions (aBOC) and the expulsion steps during the defecation motor program (DMP). Probably by regulating DMP, required for fatty acid uptake by intestinal cells and therefore regulates the levels of triglycerides in the intestine. Plays a role in locomotion. This is Endoprotease aex-5 from Caenorhabditis elegans.